We begin with the raw amino-acid sequence, 437 residues long: Probable carboxypeptidase HCBG_00059 (437 aa).

Residues 1-20 form the signal peptide; it reads MKLSNLAALLSASTVAPVAA. Residue Asn-153 is glycosylated (N-linked (GlcNAc...) asparagine). Position 163 (Asp-163) interacts with Zn(2+). Glu-195 serves as the catalytic Proton acceptor. Residue Glu-196 coordinates Zn(2+). A glycan (N-linked (GlcNAc...) asparagine) is linked at Asn-346.

This sequence belongs to the peptidase M20A family. Zn(2+) is required as a cofactor.

The protein localises to the secreted. The chain is Probable carboxypeptidase HCBG_00059 from Ajellomyces capsulatus (strain G186AR / H82 / ATCC MYA-2454 / RMSCC 2432) (Darling's disease fungus).